Reading from the N-terminus, the 149-residue chain is D-aminoacyl-tRNA deacylase (149 aa).

The Gly-cisPro motif, important for rejection of L-amino acids signature appears at 137–138 (GP).

It belongs to the DTD family. Homodimer.

The protein localises to the cytoplasm. It carries out the reaction glycyl-tRNA(Ala) + H2O = tRNA(Ala) + glycine + H(+). The enzyme catalyses a D-aminoacyl-tRNA + H2O = a tRNA + a D-alpha-amino acid + H(+). Its function is as follows. An aminoacyl-tRNA editing enzyme that deacylates mischarged D-aminoacyl-tRNAs. Also deacylates mischarged glycyl-tRNA(Ala), protecting cells against glycine mischarging by AlaRS. Acts via tRNA-based rather than protein-based catalysis; rejects L-amino acids rather than detecting D-amino acids in the active site. By recycling D-aminoacyl-tRNA to D-amino acids and free tRNA molecules, this enzyme counteracts the toxicity associated with the formation of D-aminoacyl-tRNA entities in vivo and helps enforce protein L-homochirality. This Halothermothrix orenii (strain H 168 / OCM 544 / DSM 9562) protein is D-aminoacyl-tRNA deacylase.